The primary structure comprises 414 residues: Secernin-1 (414 aa).

It belongs to the peptidase C69 family. Secernin subfamily.

It is found in the cytoplasm. Regulates exocytosis in mast cells. Increases both the extent of secretion and the sensitivity of mast cells to stimulation with calcium. The protein is Secernin-1 (Scrn1) of Rattus norvegicus (Rat).